A 341-amino-acid polypeptide reads, in one-letter code: DER1-like family member protein 1 (341 aa).

Topologically, residues 1-41 (MAGPRNVRTLHGNGGRNNDVMGPKEFWLNIPPITRTLFTLA) are cytoplasmic. A helical membrane pass occupies residues 42-62 (IVMTIVGRLNLINPWYFIYVW). Residues 63–122 (NLTFKKVQIWRLLTSCVMLSSRAMPALMELYSIYDRSSQLERGHFGPGLSNRRGPMVTVD) lie on the Lumenal side of the membrane. The chain crosses the membrane as a helical span at residues 123–143 (YAYYLCFCILAITTATTIIYG). The Cytoplasmic portion of the chain corresponds to 144-170 (SYYPVVLTSGFISCITYTWSIDNANVQ). The helical transmembrane segment at 171 to 191 (IMFYGLIPVWGKYFPLIQLFI) threads the bilayer. A topological domain (lumenal) is located at residue S192. A helical transmembrane segment spans residues 193 to 213 (FVFNEGDFVISLIGFTTGYLY). The Cytoplasmic segment spans residues 214–341 (TCLDTHTLGP…GQTNSPSDSQ (128 aa)). Polar residues-rich tracts occupy residues 276-286 (SSQRETRTFSG) and 296-341 (ATLS…SDSQ). Residues 276–341 (SSQRETRTFS…GQTNSPSDSQ (66 aa)) are disordered.

The protein belongs to the derlin family.

The protein localises to the endoplasmic reticulum membrane. Its function is as follows. May be involved in the degradation process of some misfolded endoplasmic reticulum (ER) luminal proteins. Its precise role is however unclear and its inability to complement der1 mutations, suggests either that it is not involved in degradation process of misfolded proteins, or that it participates in the destruction of specific misfolded ER luminal proteins. This is DER1-like family member protein 1 (DFM1) from Saccharomyces cerevisiae (strain ATCC 204508 / S288c) (Baker's yeast).